We begin with the raw amino-acid sequence, 115 residues long: NADH-ubiquinone oxidoreductase chain 3 (115 aa).

The next 3 helical transmembrane spans lie at Leu-4–Leu-24, Phe-55–Met-75, and Thr-86–Trp-106.

This sequence belongs to the complex I subunit 3 family. As to quaternary structure, core subunit of respiratory chain NADH dehydrogenase (Complex I) which is composed of 45 different subunits. Interacts with TMEM186. Interacts with TMEM242.

It is found in the mitochondrion inner membrane. The enzyme catalyses a ubiquinone + NADH + 5 H(+)(in) = a ubiquinol + NAD(+) + 4 H(+)(out). Core subunit of the mitochondrial membrane respiratory chain NADH dehydrogenase (Complex I) which catalyzes electron transfer from NADH through the respiratory chain, using ubiquinone as an electron acceptor. Essential for the catalytic activity of complex I. This Nelsonia neotomodon (Diminutive woodrat) protein is NADH-ubiquinone oxidoreductase chain 3.